A 137-amino-acid polypeptide reads, in one-letter code: Nucleoside diphosphate kinase (137 aa).

Lys-9, Phe-57, Arg-85, Thr-91, Arg-102, and Asn-112 together coordinate ATP. His-115 acts as the Pros-phosphohistidine intermediate in catalysis.

This sequence belongs to the NDK family. In terms of assembly, homotetramer. Mg(2+) serves as cofactor.

The protein resides in the cytoplasm. The catalysed reaction is a 2'-deoxyribonucleoside 5'-diphosphate + ATP = a 2'-deoxyribonucleoside 5'-triphosphate + ADP. It catalyses the reaction a ribonucleoside 5'-diphosphate + ATP = a ribonucleoside 5'-triphosphate + ADP. In terms of biological role, major role in the synthesis of nucleoside triphosphates other than ATP. The ATP gamma phosphate is transferred to the NDP beta phosphate via a ping-pong mechanism, using a phosphorylated active-site intermediate. The protein is Nucleoside diphosphate kinase of Thermus thermophilus (strain ATCC 27634 / DSM 579 / HB8).